A 248-amino-acid polypeptide reads, in one-letter code: tRNA (guanine-N(1)-)-methyltransferase (248 aa).

S-adenosyl-L-methionine is bound by residues Gly113 and 133–138 (IGDYVL).

The protein belongs to the RNA methyltransferase TrmD family. In terms of assembly, homodimer.

It localises to the cytoplasm. The enzyme catalyses guanosine(37) in tRNA + S-adenosyl-L-methionine = N(1)-methylguanosine(37) in tRNA + S-adenosyl-L-homocysteine + H(+). In terms of biological role, specifically methylates guanosine-37 in various tRNAs. This chain is tRNA (guanine-N(1)-)-methyltransferase, found in Shewanella baltica (strain OS223).